A 368-amino-acid polypeptide reads, in one-letter code: Type 2 DNA topoisomerase 6 subunit A (368 aa).

One can recognise a Topo IIA-type catalytic domain in the interval 9–148; that stretch reads TEDEIARERL…FHMRPEESGA (140 aa). Tyr-103 serves as the catalytic O-(5'-phospho-DNA)-tyrosine intermediate. Glu-201 and Asp-253 together coordinate Mg(2+).

This sequence belongs to the TOP6A family. In terms of assembly, homodimer. Heterotetramer of two Top6A and two Top6B chains. It depends on Mg(2+) as a cofactor.

The enzyme catalyses ATP-dependent breakage, passage and rejoining of double-stranded DNA.. Relaxes both positive and negative superturns and exhibits a strong decatenase activity. The protein is Type 2 DNA topoisomerase 6 subunit A of Natronomonas pharaonis (strain ATCC 35678 / DSM 2160 / CIP 103997 / JCM 8858 / NBRC 14720 / NCIMB 2260 / Gabara) (Halobacterium pharaonis).